Here is a 223-residue protein sequence, read N- to C-terminus: Ras-related protein Rab-37 (223 aa).

The span at 1–13 (MTGTPGAATAGDG) shows a compositional bias: low complexity. A disordered region spans residues 1–22 (MTGTPGAATAGDGEAPERSPPF). Thr2 is subject to N-acetylthreonine. Positions 38, 39, 40, 41, 42, 43, 44, and 62 each coordinate GTP. Thr43 contributes to the Mg(2+) binding site. 2 short sequence motifs (switch) span residues 52–67 (GAFL…GIDS) and 85–102 (DTAG…YYRD). Mg(2+)-binding residues include Thr62 and Asp85. GTP-binding residues include Gly88, Asn143, Lys144, Asp146, Ser173, Ala174, and Lys175. Residues Cys219 and Cys220 are each lipidated (S-geranylgeranyl cysteine). A Cysteine methyl ester modification is found at Cys220. Residues 221–223 (SFV) constitute a propeptide, removed in mature form.

It belongs to the small GTPase superfamily. Rab family. As to quaternary structure, interacts with RIMS1. Interacts (in GDP-bound form) with RPGR, RPGR functions as guanine exchange factor (GEF). Requires Mg(2+) as cofactor. As to expression, expressed in the retina (at protein level). Specifically expressed in the bone marrow mast cells.

It is found in the cytoplasmic vesicle. Its subcellular location is the cell projection. It localises to the cilium. It catalyses the reaction GTP + H2O = GDP + phosphate + H(+). Its activity is regulated as follows. Regulated by guanine nucleotide exchange factors (GEFs) including RPGR which promote the exchange of bound GDP for free GTP. Regulated by GTPase activating proteins (GAPs) which increase the GTP hydrolysis activity. Inhibited by GDP dissociation inhibitors (GDIs). In terms of biological role, the small GTPases Rab are key regulators of intracellular membrane trafficking, from the formation of transport vesicles to their fusion with membranes. Rabs cycle between an inactive GDP-bound form and an active GTP-bound form that is able to recruit to membranes different sets of downstream effectors directly responsible for vesicle formation, movement, tethering and fusion. Acts as an organizer for autophagosome biogenesis in a GTP-dependent manner. Involved in retinal homeostasis by autophagy regulation. In Mus musculus (Mouse), this protein is Ras-related protein Rab-37.